The chain runs to 543 residues: Glutamyl-tRNA(Gln) amidotransferase subunit A, chloroplastic/mitochondrial (543 aa).

Catalysis depends on charge relay system residues Lys-121 and Ser-196. The active-site Acyl-ester intermediate is the Ser-220.

It belongs to the amidase family. GatA subfamily. As to quaternary structure, subunit of the heterotrimeric GatCAB amidotransferase (AdT) complex, composed of A, B and C subunits.

It localises to the mitochondrion. The protein resides in the plastid. It is found in the chloroplast stroma. The catalysed reaction is L-glutamyl-tRNA(Gln) + L-glutamine + ATP + H2O = L-glutaminyl-tRNA(Gln) + L-glutamate + ADP + phosphate + H(+). Its function is as follows. Allows the formation of correctly charged Gln-tRNA(Gln) through the transamidation of misacylated Glu-tRNA(Gln) in chloroplasts and mitochondria. The reaction takes place in the presence of glutamine and ATP through an activated gamma-phospho-Glu-tRNA(Gln). This is Glutamyl-tRNA(Gln) amidotransferase subunit A, chloroplastic/mitochondrial from Zea mays (Maize).